The primary structure comprises 683 residues: Translation factor guf1, mitochondrial (683 aa).

A mitochondrion-targeting transit peptide spans 1–43; sequence MRGCLQLARWLSAAPKGTAASLTRAPFVLANAPRYFTSSASRA. The tr-type G domain maps to 66–250; that stretch reads ERYRNFCIVA…KIPAYGHFPV (185 aa). Residues 75–82, 139–143, and 193–196 contribute to the GTP site; these read AHVDHGKS, DTPGH, and NKVD.

This sequence belongs to the TRAFAC class translation factor GTPase superfamily. Classic translation factor GTPase family. LepA subfamily.

Its subcellular location is the mitochondrion inner membrane. The enzyme catalyses GTP + H2O = GDP + phosphate + H(+). Its function is as follows. Promotes mitochondrial protein synthesis. May act as a fidelity factor of the translation reaction, by catalyzing a one-codon backward translocation of tRNAs on improperly translocated ribosomes. Binds to mitochondrial ribosomes in a GTP-dependent manner. The sequence is that of Translation factor guf1, mitochondrial (guf1) from Aspergillus fumigatus (strain ATCC MYA-4609 / CBS 101355 / FGSC A1100 / Af293) (Neosartorya fumigata).